Consider the following 381-residue polypeptide: Mannitol-1-phosphate 5-dehydrogenase (381 aa).

3–14 (TLHFGAGNIGRG) is an NAD(+) binding site.

It belongs to the mannitol dehydrogenase family.

The enzyme catalyses D-mannitol 1-phosphate + NAD(+) = beta-D-fructose 6-phosphate + NADH + H(+). This chain is Mannitol-1-phosphate 5-dehydrogenase, found in Aeromonas salmonicida (strain A449).